The chain runs to 274 residues: 4-diphosphocytidyl-2-C-methyl-D-erythritol kinase (274 aa).

Lysine 8 is a catalytic residue. 94–104 (PSGAGLGGGSS) contributes to the ATP binding site. Residue aspartate 136 is part of the active site.

Belongs to the GHMP kinase family. IspE subfamily.

It catalyses the reaction 4-CDP-2-C-methyl-D-erythritol + ATP = 4-CDP-2-C-methyl-D-erythritol 2-phosphate + ADP + H(+). It participates in isoprenoid biosynthesis; isopentenyl diphosphate biosynthesis via DXP pathway; isopentenyl diphosphate from 1-deoxy-D-xylulose 5-phosphate: step 3/6. Its function is as follows. Catalyzes the phosphorylation of the position 2 hydroxy group of 4-diphosphocytidyl-2C-methyl-D-erythritol. This is 4-diphosphocytidyl-2-C-methyl-D-erythritol kinase from Bacteroides thetaiotaomicron (strain ATCC 29148 / DSM 2079 / JCM 5827 / CCUG 10774 / NCTC 10582 / VPI-5482 / E50).